A 357-amino-acid polypeptide reads, in one-letter code: tRNA N6-adenosine threonylcarbamoyltransferase (357 aa).

Fe cation is bound by residues His-115 and His-119. Substrate-binding positions include 137 to 141, Asp-170, Gly-183, and Asn-281; that span reads LASGG. Fe cation is bound at residue Asp-309.

It belongs to the KAE1 / TsaD family. Requires Fe(2+) as cofactor.

It is found in the cytoplasm. It carries out the reaction L-threonylcarbamoyladenylate + adenosine(37) in tRNA = N(6)-L-threonylcarbamoyladenosine(37) in tRNA + AMP + H(+). Functionally, required for the formation of a threonylcarbamoyl group on adenosine at position 37 (t(6)A37) in tRNAs that read codons beginning with adenine. Is involved in the transfer of the threonylcarbamoyl moiety of threonylcarbamoyl-AMP (TC-AMP) to the N6 group of A37, together with TsaE and TsaB. TsaD likely plays a direct catalytic role in this reaction. The polypeptide is tRNA N6-adenosine threonylcarbamoyltransferase (Afipia carboxidovorans (strain ATCC 49405 / DSM 1227 / KCTC 32145 / OM5) (Oligotropha carboxidovorans)).